We begin with the raw amino-acid sequence, 372 residues long: Cytochrome b (372 aa).

4 helical membrane passes run 25 to 45 (FGSM…FLAI), 69 to 90 (WMMQ…YIHI), 105 to 125 (WLSG…GYVL), and 170 to 190 (FFAL…IHIM). The heme b site is built by His75 and His89. Heme b is bound by residues His174 and His188. His193 serves as a coordination point for a ubiquinone. The next 4 membrane-spanning stretches (helical) occupy residues 218-238 (HKDM…MSFT), 280-300 (LGGT…PFTH), 312-332 (LMQF…WAAT), and 339-358 (FTSI…TMNP).

It belongs to the cytochrome b family. In terms of assembly, the cytochrome bc1 complex contains 3 respiratory subunits (MT-CYB, CYC1 and UQCRFS1), 2 core proteins (UQCRC1 and UQCRC2) and probably 6 low-molecular weight proteins. Heme b is required as a cofactor.

Its subcellular location is the mitochondrion inner membrane. Functionally, component of the ubiquinol-cytochrome c reductase complex (complex III or cytochrome b-c1 complex) that is part of the mitochondrial respiratory chain. The b-c1 complex mediates electron transfer from ubiquinol to cytochrome c. Contributes to the generation of a proton gradient across the mitochondrial membrane that is then used for ATP synthesis. The protein is Cytochrome b (MT-CYB) of Pantherophis vulpinus (Western fox snake).